A 686-amino-acid polypeptide reads, in one-letter code: Translation initiation factor IF-2 (686 aa).

The interval 54-105 (KPSVADEFEVEEKVVRSKKNSNKKKKKGKGNEDKRQENFAGRQQTQTVETPD) is disordered. Residues 69–81 (RSKKNSNKKKKKG) are compositionally biased toward basic residues. The tr-type G domain maps to 188–357 (ERPAVVTIMG…LLVSEVEEYK (170 aa)). The G1 stretch occupies residues 197-204 (GHVDHGKT). 197 to 204 (GHVDHGKT) contacts GTP. The segment at 222–226 (GITQH) is G2. Residues 243-246 (DTPG) form a G3 region. Residues 243 to 247 (DTPGH) and 297 to 300 (NKMD) contribute to the GTP site. The interval 297–300 (NKMD) is G4. The interval 333–335 (SAI) is G5.

Belongs to the TRAFAC class translation factor GTPase superfamily. Classic translation factor GTPase family. IF-2 subfamily.

It localises to the cytoplasm. One of the essential components for the initiation of protein synthesis. Protects formylmethionyl-tRNA from spontaneous hydrolysis and promotes its binding to the 30S ribosomal subunits. Also involved in the hydrolysis of GTP during the formation of the 70S ribosomal complex. The protein is Translation initiation factor IF-2 of Bacillus cereus (strain 03BB102).